Here is a 2349-residue protein sequence, read N- to C-terminus: Reducing polyketide synthase AFT16-1 (2349 aa).

Residues 1–14 are compositionally biased toward basic and acidic residues; it reads MNGKSRDNGHDGKR. Disordered regions lie at residues 1–21 and 37–80; these read MNGK…VPAE and TNPS…TSNS. The region spanning 20-462 is the Ketosynthase family 3 (KS3) domain; it reads AEPIAIVGTA…GTNAHTILES (443 aa). Active-site for beta-ketoacyl synthase activity residues include Cys194, His333, and His382. The segment at 578-888 is malonyl-CoA:ACP transacylase (MAT) domain; sequence VFTGQGAQWP…LLYKGVLERF (311 aa). An N-terminal hotdog fold region spans residues 958-1092; sequence HPLLGFRSVD…GDILLSHFAK (135 aa). The tract at residues 958–1263 is dehydratase (DH) domain; sequence HPLLGFRSVD…QVEGLKFSCM (306 aa). Positions 958–1269 constitute a PKS/mFAS DH domain; that stretch reads HPLLGFRSVD…FSCMYPAQET (312 aa). His990 (proton acceptor; for dehydratase activity) is an active-site residue. The interval 1111–1269 is C-terminal hotdog fold; it reads MSSVEPSLFY…FSCMYPAQET (159 aa). The Proton donor; for dehydratase activity role is filled by Asp1170. The segment at 1976-2164 is ketoreductase (KR) domain; it reads SPNKTYLLVG…VVGVGYVARA (189 aa). Residues 2273 to 2347 enclose the Carrier domain; that stretch reads EILSGSLKQK…GLCLEAIGQW (75 aa). Ser2307 bears the O-(pantetheine 4'-phosphoryl)serine mark.

It participates in mycotoxin biosynthesis. Functionally, reducing polyketide synthase; part of the gene clusters that mediate the biosynthesis of the host-selective toxins (HSTs) AF-toxins responsible for Alternaria black spot of strawberry disease by the strawberry pathotype. AF-toxin I and III are valine derivatives of 2,3-dyhydroxy-isovaleric acid and 2-hydroxy-isovaleric acid respectively, while AF II is an isoleucine derivative of 2-hydroxy-valeric acid. These derivatives are bound to a 9,10-epoxy-8-hydroxy-9-methyl-decatrienoic acid (EDA) moiety. On cellular level, AF-toxins affect plasma membrane of susceptible cells and cause a sudden increase in loss of K(+) after a few minutes of toxin treatment. The aldo-keto reductase AFTS1 catalyzes the conversion of 2-keto-isovaleric acid (2-KIV) to 2-hydroxy-isovaleric acid (2-HIV) by reduction of its ketone to an alcohol. The acyl-CoA ligase AFT1, the hydrolase AFT2 and the enoyl-CoA hydratases AFT3 and AFT6, but also the polyketide synthase AFT9, the acyl-CoA dehydrogenase AFT10, the cytochrome P450 monooxygenase AFT11 and the oxidoreductase AFT12 are all involved in the biosynthesis of the AK-, AF- and ACT-toxin common EDA structural moiety. The exact function of each enzyme, and of additional enzymes identified within the AF-toxin clusters have still to be determined. The chain is Reducing polyketide synthase AFT16-1 from Alternaria alternata (Alternaria rot fungus).